A 241-amino-acid polypeptide reads, in one-letter code: DnaA regulatory inactivator Hda (241 aa).

This sequence belongs to the DnaA family. HdA subfamily. The active form seems to be an ADP-bound monomer. Forms the RIDA complex (regulatory inactivation of DnaA) of ATP-DnaA, ADP-Hda and the DNA-loaded beta sliding clamp (dnaN).

Mediates the interaction of DNA replication initiator protein DnaA with DNA polymerase subunit beta sliding clamp (dnaN). Stimulates hydrolysis of ATP-DnaA to ADP-DnaA, rendering DnaA inactive for reinitiation, a process called regulatory inhibition of DnaA or RIDA. This chain is DnaA regulatory inactivator Hda, found in Citrobacter koseri (strain ATCC BAA-895 / CDC 4225-83 / SGSC4696).